The primary structure comprises 457 residues: Adenylosuccinate synthetase (457 aa).

GTP is bound by residues 45–51 and 73–75; these read GDEGKGK and GHT. The active-site Proton acceptor is the D46. Residues D46 and G73 each contribute to the Mg(2+) site. Residues 46-49, 71-74, T163, R177, N255, T270, and R334 contribute to the IMP site; these read DEGK and NAGH. Residue H74 is the Proton donor of the active site. 330–336 provides a ligand contact to substrate; the sequence is VTTKRVR. GTP contacts are provided by residues R336, 362 to 364, and 444 to 446; these read KLD and GVG.

Belongs to the adenylosuccinate synthetase family. Homodimer. Mg(2+) is required as a cofactor.

The protein localises to the cytoplasm. The enzyme catalyses IMP + L-aspartate + GTP = N(6)-(1,2-dicarboxyethyl)-AMP + GDP + phosphate + 2 H(+). It functions in the pathway purine metabolism; AMP biosynthesis via de novo pathway; AMP from IMP: step 1/2. In terms of biological role, plays an important role in the de novo pathway and in the salvage pathway of purine nucleotide biosynthesis. Catalyzes the first committed step in the biosynthesis of AMP from IMP. This is Adenylosuccinate synthetase from Aedes aegypti (Yellowfever mosquito).